A 536-amino-acid chain; its full sequence is Probable E3 ubiquitin-protein ligase ARI13 (536 aa).

The segment at 83–328 (KISSCGICFK…GFYKFCNVSM (246 aa)) is TRIAD supradomain. Positions 87, 90, 106, 108, 111, 114, 135, 140, 180, 185, 210, 212, 217, 220, 225, 230, 277, 280, 297, 299, 304, 307, 314, and 324 each coordinate Zn(2+). The RING-type 1 zinc finger occupies 87–140 (CGICFKTCDDGDYLISTPFCSHMFCKSCWRKYLEKNFYLVEKTQTRISCPHGAC). Residues 158 to 230 (EMYVEYILRS…MLESHKPVTC (73 aa)) form an IBR-type zinc finger. The segment at 277 to 307 (CPHCLRPADLGTKQYLRFLTCACNGRFCWKC) adopts an RING-type 2; atypical zinc-finger fold. Residues 495 to 526 (DYGGLFWLCDRCTYGNTWFHKECLMCSDDIAA) form a RanBP2-type zinc finger.

This sequence belongs to the RBR family. Ariadne subfamily. Requires Zn(2+) as cofactor.

It carries out the reaction [E2 ubiquitin-conjugating enzyme]-S-ubiquitinyl-L-cysteine + [acceptor protein]-L-lysine = [E2 ubiquitin-conjugating enzyme]-L-cysteine + [acceptor protein]-N(6)-ubiquitinyl-L-lysine.. It functions in the pathway protein modification; protein ubiquitination. Might act as an E3 ubiquitin-protein ligase, or as part of E3 complex, which accepts ubiquitin from specific E2 ubiquitin-conjugating enzymes and then transfers it to substrates. In Arabidopsis thaliana (Mouse-ear cress), this protein is Probable E3 ubiquitin-protein ligase ARI13 (ARI13).